Consider the following 197-residue polypeptide: Imidazoleglycerol-phosphate dehydratase (197 aa).

The protein belongs to the imidazoleglycerol-phosphate dehydratase family.

The protein localises to the cytoplasm. The catalysed reaction is D-erythro-1-(imidazol-4-yl)glycerol 3-phosphate = 3-(imidazol-4-yl)-2-oxopropyl phosphate + H2O. Its pathway is amino-acid biosynthesis; L-histidine biosynthesis; L-histidine from 5-phospho-alpha-D-ribose 1-diphosphate: step 6/9. This is Imidazoleglycerol-phosphate dehydratase from Methanocaldococcus jannaschii (strain ATCC 43067 / DSM 2661 / JAL-1 / JCM 10045 / NBRC 100440) (Methanococcus jannaschii).